The chain runs to 103 residues: Acylphosphatase-2 (103 aa).

Serine 2 carries the N-acetylserine modification. An Acylphosphatase-like domain is found at 13–103 (SVDYEVFGRV…LDFSGFSTRY (91 aa)). Catalysis depends on residues arginine 28 and asparagine 46.

The protein belongs to the acylphosphatase family.

It carries out the reaction an acyl phosphate + H2O = a carboxylate + phosphate + H(+). In terms of biological role, its physiological role is not yet clear. This Gallus gallus (Chicken) protein is Acylphosphatase-2 (ACYP2).